A 1558-amino-acid chain; its full sequence is MQFITGPKLNGAAASTGALSPEVIAVYPMTKAQESLWLAYSMAPNHTLYNLSLKFVFNQTEAASDGSIAIRDLTRRHAILRSTFHGANQSQARPFVAEHNPDTATASFRIVPKPRDARGEAKVLGLLRTAVNLSQEFASRWLAVVSDREIELYLVAHHIALDGTSMSSISAELFKLLSGSPATPAEQPFCQAHMYEVITYIVRRFSSRRILTPFKAAFSASPEYQAAERFWLDQVMHVRPYKWITNPSSRPAPSKSYREIQTWFDFSKDDLAAWGSKYRTSWFRVAVAMVGLLTRAHTEPDYGADQTVTVAFGGRPAGLEKSIGHFANAMPIRIPFTEASRKTSGAAQVSFDNLVKLVSKQISTAKKHERYSILDLSRARASRGLETPRAQVAVTLSPKLSHKECTLYPVEGPYDLFFCFLEGDDNVTLGVIYDPIIFSTADVARLKDEFSSLRERSMTDPSFGVSGISGVQSHLPRLLPELDLSNVDEISAARFHAWFEQQALAHPNLVALHSAERNLSVTYKELNERSNRLGHYLREIGISRGSLVLLYLEHGPAVMEWIIAVLKAGAAYAVADQSNPPERIRSIVSVAEPVLVIHDQKGEAIREIIQESPVKTLDIRTVQIEKFSSESLEEVTQNTDLAYIVFTSGSTGQPKGVEIEHRNLSHFVANAFTSNYTTIGPGTRVLQLATFAFDAAVLEWSQCLSLGGTLCFADVPKALVGDYLADVIDLNEVSFMHLTPSVLATLPTSRPLPSLRQISVGGEMVPDNLIKKWRSRVQVVNAYGPTECTVVMAHQPQPIASDAPQPAANIIGAAHQHMKFYVSNDAFTRLLPAGEVGEVCIGGPQVGRGYKSRPDLTENRFAVHPELGARLYRTGDRGKLLGDGSVFLVGRIDREVKVRGDIELDDVERTITDVMPEVTAVSVQPDSSSTSLWAFVSPDDIDGDVLRNRLTERLPAYMVPSTVYALPQLPLNMNGKVDHKSIAANMESLIVEATTSGSSSSATPSLVSSGSTTCRSPSTSSCSDSRSASPAITSAVTRIWQDILGTKGLITTSDNFFDLGGNSLSANKLATQLRSEFSSSNITVLDIFSSPTIQGQVDLLCGSELDSYVQSKLDSLGRGRTKSPAKIVDSQGRSSPSTIPSGGRKSEIAIVGISGRFPGASNPDELYRLFRDRKEGISELEGSSGVLPFPGAIYVPRRGAIKDVEYFDPAAWGLKEDEARNMDPQQRLFMESTLRALQDANRVPSIQGTNNIGLFVGAARDTWQDATETVYGDEFYRTHRADLTPSISARTAYHLNLQGPNVTLNTACSSGMVALSVAVDQLRAGRCDMAVAGAVAIAFPQEGYVTAESQIFSPSGHCRPFDHRADGTLPADGVCALVLRPLDDAVRDGDKIYSVISGIATGSDGRLDKAGVTAPSPRGQADTIERAWKDAGIPMSKAVYAELHGSGTPIGDALELEGFQMARSRLGAANNRCTVGSNKGNLGNCEAASGLVSVIKMCKSMQYGVIPPVQSLERVNPLINPSLPFDIAQTDLPLSDDAVVCVSSTGLGGVNAHCVLRS.

The interval 27 to 392 is condensation (C) domain; it reads YPMTKAQESL…RGLETPRAQV (366 aa). Positions 522–919 are adenylation (A) domain; it reads TYKELNERSN…TITDVMPEVT (398 aa). Residues 995–1028 are disordered; sequence TSGSSSSATPSLVSSGSTTCRSPSTSSCSDSRSA. In terms of domain architecture, Carrier spans 1027–1104; sequence SASPAITSAV…GQVDLLCGSE (78 aa). Ser1063 is modified (O-(pantetheine 4'-phosphoryl)serine). A disordered region spans residues 1116–1144; it reads LGRGRTKSPAKIVDSQGRSSPSTIPSGGR. The segment covering 1131–1140 has biased composition (polar residues); it reads QGRSSPSTIP. Residues 1145-1558 enclose the Ketosynthase family 3 (KS3) domain; sequence KSEIAIVGIS…GVNAHCVLRS (414 aa). Catalysis depends on for beta-ketoacyl synthase activity residues Cys1308, His1444, and Asn1484.

This sequence in the N-terminal section; belongs to the NRP synthetase family. The cofactor is pantetheine 4'-phosphate.

It carries out the reaction acetoacetyl-CoA + L-isoleucine + ATP = tenuazonic acid + AMP + diphosphate + CoA + 2 H(+). Hybrid PKS-NRPS synthetase that mediates the biosynthesis of the toxin tenuazonic acid (TeA), an inhibitor of protein biosynthesis on ribosomes by suppressing the release of new protein. TAS1 alone is sufficient for TeA synthesis via the condensation of isoleucine (Ile) with acetoacetyl-CoA by the N-terminal NRPS module and subsequent cyclization conducted by the C-terminal KS domain. This is Hybrid PKS-NRPS synthetase TAS1 from Gloeophyllum trabeum (strain ATCC 11539 / FP-39264 / Madison 617) (Brown rot fungus).